Here is a 241-residue protein sequence, read N- to C-terminus: Leucyl/phenylalanyl-tRNA--protein transferase (241 aa).

This sequence belongs to the L/F-transferase family.

It is found in the cytoplasm. The enzyme catalyses N-terminal L-lysyl-[protein] + L-leucyl-tRNA(Leu) = N-terminal L-leucyl-L-lysyl-[protein] + tRNA(Leu) + H(+). The catalysed reaction is N-terminal L-arginyl-[protein] + L-leucyl-tRNA(Leu) = N-terminal L-leucyl-L-arginyl-[protein] + tRNA(Leu) + H(+). It catalyses the reaction L-phenylalanyl-tRNA(Phe) + an N-terminal L-alpha-aminoacyl-[protein] = an N-terminal L-phenylalanyl-L-alpha-aminoacyl-[protein] + tRNA(Phe). In terms of biological role, functions in the N-end rule pathway of protein degradation where it conjugates Leu, Phe and, less efficiently, Met from aminoacyl-tRNAs to the N-termini of proteins containing an N-terminal arginine or lysine. This chain is Leucyl/phenylalanyl-tRNA--protein transferase, found in Neisseria meningitidis serogroup B (strain ATCC BAA-335 / MC58).